Here is a 122-residue protein sequence, read N- to C-terminus: Lectin A (122 aa).

Tyrosine 38 contacts Ca(2+). Glutamate 44, glutamine 57, and aspartate 96 together coordinate an alpha-D-galactoside. The Ca(2+) site is built by aspartate 96, threonine 100, aspartate 103, and asparagine 104. Aspartate 103 provides a ligand contact to an alpha-D-galactoside.

Belongs to the LecA/PllA lectin family. As to quaternary structure, homotetramer.

Lectin that specifically binds alpha-galactoside-terminating glycoconjugates. Shows high apparent binding to the alpha-Gal epitope (Gal-alpha-1,3-Gal-beta-1,4-GlcNAc terminating glycans) as well as to Gal-alpha-1,4-GlcNAc and Gal-alpha-1,3-GalNAc. Gal-alpha-1,3-GalNAc may be one natural ligand bound by PllA both in the nematode symbiont and in infected insects. The protein is Lectin A of Photorhabdus laumondii subsp. laumondii (strain DSM 15139 / CIP 105565 / TT01) (Photorhabdus luminescens subsp. laumondii).